The primary structure comprises 90 residues: DNA-binding protein HTa (90 aa).

Belongs to the bacterial histone-like protein family. Homotetramer.

Functionally, histone-like DNA-binding protein which is capable of wrapping DNA to stabilize it, and thus to prevent its denaturation under extreme environmental conditions. The chain is DNA-binding protein HTa from Thermoplasma acidophilum (strain ATCC 25905 / DSM 1728 / JCM 9062 / NBRC 15155 / AMRC-C165).